A 155-amino-acid chain; its full sequence is Large ribosomal subunit protein uL30 (155 aa).

This sequence belongs to the universal ribosomal protein uL30 family. In terms of assembly, part of the 50S ribosomal subunit.

The chain is Large ribosomal subunit protein uL30 from Cenarchaeum symbiosum (strain A).